Reading from the N-terminus, the 166-residue chain is Urease accessory protein UreE (166 aa).

Belongs to the UreE family.

The protein resides in the cytoplasm. Involved in urease metallocenter assembly. Binds nickel. Probably functions as a nickel donor during metallocenter assembly. The sequence is that of Urease accessory protein UreE from Pseudomonas fluorescens (strain Pf0-1).